The chain runs to 433 residues: Probable mannan endo-1,4-beta-mannosidase F (433 aa).

A signal peptide spans 1–19 (MKRQALTLIPLLGAAAAQS). A CBM1 domain is found at 20–53 (GPYGQCGGNDWSGATTCVSGYVCVYQNEWYSQCV). Residues 56-82 (TATSSSTTLTTTTSATTRTTTTTTSTT) form a thr-rich linker region. Residues 83-433 (SVPSSTNFPS…TEHMERIAAR (351 aa)) form a catalytic region. An N-linked (GlcNAc...) asparagine glycan is attached at asparagine 97. Residues tryptophan 142 and asparagine 255 each contribute to the substrate site. Catalysis depends on glutamate 256, which acts as the Proton donor. Residue tyrosine 331 coordinates substrate. The active-site Nucleophile is the glutamate 364. Position 394 (tryptophan 394) interacts with substrate.

Belongs to the glycosyl hydrolase 5 (cellulase A) family.

The protein localises to the secreted. It carries out the reaction Random hydrolysis of (1-&gt;4)-beta-D-mannosidic linkages in mannans, galactomannans and glucomannans.. Endo-1,4-mannanase, a crucial enzyme for depolymerization of seed galactomannans and wood galactoglucomannans. The protein is Probable mannan endo-1,4-beta-mannosidase F (manF) of Emericella nidulans (strain FGSC A4 / ATCC 38163 / CBS 112.46 / NRRL 194 / M139) (Aspergillus nidulans).